The following is a 441-amino-acid chain: Anti-sigma-I factor RsgI (441 aa).

At 1–53 (MMNKGIVMDIKKHSVVVLTPNGEFITCKRKGDSCMIGEEISFDEQEQKASRFS) the chain is on the cytoplasmic side. Residues 3–51 (NKGIVMDIKKHSVVVLTPNGEFITCKRKGDSCMIGEEISFDEQEQKASR) enclose the RsgI N-terminal anti-sigma domain. A helical membrane pass occupies residues 54–76 (IPYFLKPASLLVACFLCALLFFY). The Extracellular segment spans residues 77–441 (NQPEEKVFAY…HQQGNEKKNQ (365 aa)). Positions 213 to 441 (ENEKNKSVTP…HQQGNEKKNQ (229 aa)) are disordered. Positions 219-230 (SVTPPATPSNPV) are enriched in polar residues. The span at 240–251 (PDSSPDVVPDLS) shows a compositional bias: low complexity. A compositionally biased stretch (basic and acidic residues) spans 252 to 281 (SVKDKKYEKPEYKEQKKIEEQPTKQIKENN). Low complexity-rich tracts occupy residues 282–328 (GRGS…QQGN), 336–358 (NNGH…QQGN), and 366–408 (NNGH…NGRG). A compositionally biased stretch (polar residues) spans 411-428 (KENVGNEQGNNGRGSQQE). Over residues 429 to 441 (NRGHQQGNEKKNQ) the composition is skewed to basic and acidic residues.

In terms of assembly, interacts (via RsgI N-terminal anti-sigma domain) with SigI.

Its subcellular location is the cell membrane. Its function is as follows. Anti-sigma factor for SigI. Negatively regulates SigI activity through direct interaction. Has no direct effect on virulence gene expression. This chain is Anti-sigma-I factor RsgI, found in Bacillus anthracis.